A 471-amino-acid chain; its full sequence is Arginine biosynthesis bifunctional protein ArgJ, mitochondrial (471 aa).

The substrate site is built by Thr201, Lys230, Thr241, Glu328, Asn466, and Thr471. The active-site Nucleophile is the Thr241.

Belongs to the ArgJ family. Heterodimer of an alpha and a beta chain. Post-translationally, the alpha and beta chains are autoproteolytically processed from a single precursor protein within the mitochondrion.

It localises to the mitochondrion matrix. The enzyme catalyses N(2)-acetyl-L-ornithine + L-glutamate = N-acetyl-L-glutamate + L-ornithine. It carries out the reaction L-glutamate + acetyl-CoA = N-acetyl-L-glutamate + CoA + H(+). It participates in amino-acid biosynthesis; L-arginine biosynthesis; L-ornithine and N-acetyl-L-glutamate from L-glutamate and N(2)-acetyl-L-ornithine (cyclic): step 1/1. It functions in the pathway amino-acid biosynthesis; L-arginine biosynthesis; N(2)-acetyl-L-ornithine from L-glutamate: step 1/4. Functionally, catalyzes two activities which are involved in the cyclic version of arginine biosynthesis: the synthesis of acetylglutamate from glutamate and acetyl-CoA, and of ornithine by transacetylation between acetylornithine and glutamate. The chain is Arginine biosynthesis bifunctional protein ArgJ, mitochondrial from Ajellomyces capsulatus (strain NAm1 / WU24) (Darling's disease fungus).